The primary structure comprises 855 residues: Potassium channel AKT2 (855 aa).

Positions 1 to 12 (MKTSSFESASSS) are enriched in low complexity. A disordered region spans residues 1–24 (MKTSSFESASSSGGSGGGGGGGGG). Over 1–75 (MKTSSFESAS…PLDSRYRCWD (75 aa)) the chain is Cytoplasmic. Gly residues predominate over residues 13 to 24 (GGSGGGGGGGGG). A helical membrane pass occupies residues 76–96 (TFMVVLVAYSAWVYPFEVAFM). Over 97 to 105 (NASPKGGLE) the chain is Extracellular. Residues 106-126 (VADIVVDLFFAVDIVLTFFVA) traverse the membrane as a helical segment. Over 127 to 149 (YIDSRTQLLVRDRRRIATRYLST) the chain is Cytoplasmic. The chain crosses the membrane as a helical span at residues 150-170 (FFIMDVASTIPFQGLAYIVTG). At 171-179 (EVRESPAFS) the chain is on the extracellular side. The helical; Voltage-sensor transmembrane segment at 180 to 200 (LLGILRLWRLRKVKQFFTRLE) threads the bilayer. The Cytoplasmic segment spans residues 201–214 (KDIRFNYFWIRCAR). Residues 215 to 235 (LIAVTLFLVHCAGCLYYLIAD) form a helical membrane-spanning segment. The Extracellular segment spans residues 236 to 262 (RYPHREKTWIGAVIPDFQEASLWIRYT). The pore-forming intramembrane region spans 263 to 282 (SSVYWSITTMTTVGYGDMHA). Residues 283–285 (QNT) are Extracellular-facing. A helical transmembrane segment spans residues 286 to 306 (VEMIFNIFYMLFNLGLTAYLI). At 307 to 855 (GNMTNLVVEG…VASMDSVSGS (549 aa)) the chain is on the cytoplasmic side. 391–511 (LFKGVSREVL…VVIIKNFLKH (121 aa)) serves as a coordination point for a nucleoside 3',5'-cyclic phosphate. ANK repeat units lie at residues 536-565 (NIPC…DPDV), 569-598 (KGRT…NVNI), 602-631 (QGNT…VSSP), 634-663 (AAGD…AVDS), and 667-696 (DGAT…SVDR). The segment at 744 to 765 (EVGSSGDSRNGRRQSARSDGAH) is disordered. The region spanning 768-855 (RVSIYRGHPF…VASMDSVSGS (88 aa)) is the KHA domain.

Belongs to the potassium channel family. Plant (TC 1.A.1.4) subfamily. In terms of assembly, the potassium channel is probably a homo- or heterotetrameric complex of pore-forming subunits.

Its subcellular location is the membrane. Its function is as follows. Probable inward-rectifying potassium channel. Assuming opened or closed conformations in response to the voltage difference across the membrane, the channel is activated by hyperpolarization. The protein is Potassium channel AKT2 of Oryza sativa subsp. japonica (Rice).